We begin with the raw amino-acid sequence, 594 residues long: Gamma-terpinene synthase, chloroplastic (594 aa).

A chloroplast-targeting transit peptide spans 1-44; the sequence is MATLSMQVSILSKEVKNVNNIGMRASKPMVARRVSTTRLRPICS. Residues Asp-347 and Asp-351 each contribute to the Mn(2+) site. Residues 347-351 carry the DDXXD motif motif; that stretch reads DDVYD. Homodimerization stretches follow at residues 353-359 and 425-462; these read YGTLDEL and EAKW…FTLP. Mn(2+)-binding residues include Asp-491 and Glu-499.

This sequence belongs to the terpene synthase family. In terms of assembly, homodimer. It depends on Mn(2+) as a cofactor. Requires Mg(2+) as cofactor. In terms of tissue distribution, expressed in peltate glandular trichomes.

Its subcellular location is the plastid. The protein resides in the chloroplast. It catalyses the reaction (2E)-geranyl diphosphate = gamma-terpinene + diphosphate. The catalysed reaction is (2E)-geranyl diphosphate = alpha-terpinene + diphosphate. It functions in the pathway secondary metabolite biosynthesis; terpenoid biosynthesis. Functionally, involved in the biosynthesis of phenolic monoterpenes natural products thymol and carvacrol which have a broad range of biological activities acting as antimicrobial compounds, insecticides, antioxidants and pharmaceutical agents. Monoterpene synthase which catalyzes the conversion of geranyl diphosphate (GPP) to gamma-terpinene and the minor products alpha-thujene, alpha-terpinene, myrcene, sabinene, (+)-R-limonene, alpha-pinene and alpha-phellandrene. The chain is Gamma-terpinene synthase, chloroplastic from Origanum vulgare (Wild marjoram).